A 145-amino-acid polypeptide reads, in one-letter code: Male-specific protein scotti (145 aa).

Residues 1–34 are disordered; it reads MANNRLMPEGQIIEEDMDGEDQNARELDIDDDDD. Acidic residues predominate over residues 12 to 21; it reads IIEEDMDGED.

The protein belongs to the male-specific scotti family.

Its function is as follows. Post-meiotically transcribed gene that has a role in late spermiogenesis; required for actin cone progression during spermatid individualization. In Drosophila willistoni (Fruit fly), this protein is Male-specific protein scotti.